The primary structure comprises 325 residues: Elongation factor P--(R)-beta-lysine ligase (325 aa).

76–78 (SPE) contributes to the substrate binding site. ATP contacts are provided by residues 100–102 (RNE) and Asn-109. Tyr-118 is a substrate binding site. Residue 244–245 (EL) coordinates ATP. Glu-251 lines the substrate pocket. Gly-300 contributes to the ATP binding site.

It belongs to the class-II aminoacyl-tRNA synthetase family. EpmA subfamily. As to quaternary structure, homodimer.

The catalysed reaction is D-beta-lysine + L-lysyl-[protein] + ATP = N(6)-((3R)-3,6-diaminohexanoyl)-L-lysyl-[protein] + AMP + diphosphate + H(+). With EpmB is involved in the beta-lysylation step of the post-translational modification of translation elongation factor P (EF-P) on 'Lys-34'. Catalyzes the ATP-dependent activation of (R)-beta-lysine produced by EpmB, forming a lysyl-adenylate, from which the beta-lysyl moiety is then transferred to the epsilon-amino group of EF-P 'Lys-34'. This is Elongation factor P--(R)-beta-lysine ligase from Salmonella agona (strain SL483).